A 568-amino-acid polypeptide reads, in one-letter code: Protein KATNIP homolog (568 aa).

The segment covering 1-20 (MSDSDLKEIEKNAENIKLEP) has biased composition (basic and acidic residues). Residues 1–30 (MSDSDLKEIEKNAENIKLEPAEDEVNEEDQ) are disordered. The span at 21–30 (AEDEVNEEDQ) shows a compositional bias: acidic residues.

In terms of tissue distribution, expressed in most ciliated neuronal cells. Not expressed in non-ciliated cells.

The protein resides in the cytoplasm. It is found in the cytoskeleton. The protein localises to the cilium axoneme. It localises to the cilium basal body. Functionally, may regulate ciliary A-tubule number and, along with arl-13, controls cilium integrity. The polypeptide is Protein KATNIP homolog (Caenorhabditis elegans).